Consider the following 420-residue polypeptide: Glutamate-1-semialdehyde 2,1-aminomutase (420 aa).

Lys259 bears the N6-(pyridoxal phosphate)lysine mark.

This sequence belongs to the class-III pyridoxal-phosphate-dependent aminotransferase family. HemL subfamily. It depends on pyridoxal 5'-phosphate as a cofactor.

Its subcellular location is the cytoplasm. The enzyme catalyses (S)-4-amino-5-oxopentanoate = 5-aminolevulinate. Its pathway is porphyrin-containing compound metabolism; protoporphyrin-IX biosynthesis; 5-aminolevulinate from L-glutamyl-tRNA(Glu): step 2/2. This Sulfolobus acidocaldarius (strain ATCC 33909 / DSM 639 / JCM 8929 / NBRC 15157 / NCIMB 11770) protein is Glutamate-1-semialdehyde 2,1-aminomutase.